The primary structure comprises 338 residues: GTPase Obg (338 aa).

The region spanning 1–159 (MKFVDSASVF…FTLDLELKLM (159 aa)) is the Obg domain. The tract at residues 123 to 145 (GGRGNQHFATSTHQAPRHAEPGQ) is disordered. The 164-residue stretch at 160 to 323 (ADVGLVGFPN…LKDALWRIIV (164 aa)) folds into the OBG-type G domain. Residues 166–173 (GFPNAGKS), 191–195 (FTTLV), 213–216 (DIPG), 280–283 (TKMD), and 304–306 (SAV) each bind GTP. Positions 173 and 193 each coordinate Mg(2+).

This sequence belongs to the TRAFAC class OBG-HflX-like GTPase superfamily. OBG GTPase family. Monomer. The cofactor is Mg(2+).

It localises to the cytoplasm. An essential GTPase which binds GTP, GDP and possibly (p)ppGpp with moderate affinity, with high nucleotide exchange rates and a fairly low GTP hydrolysis rate. Plays a role in control of the cell cycle, stress response, ribosome biogenesis and in those bacteria that undergo differentiation, in morphogenesis control. The sequence is that of GTPase Obg from Chlorobium chlorochromatii (strain CaD3).